Consider the following 262-residue polypeptide: MTNLKELRINIEKFPEALHNTLKDAKIYDSSSSPEAQVLFIDKKDGYYLKIASSKTLEREAEMTAYFQKKKLGLGYISYLSDQSQDFLLKKKIQGENYLAKQYLNNPKRLCDNLAENLRFLHEQNFEDCPILDHSERYLKKVEKNASINNSNLDFVNNYNIRTIEEAYDYIENKKLLLRNDTLLHGDYCLPNIILDNWKFKGFIDLDCAGVGDRHIDLFWGAWTLNFNIGTDQYRDRFFDAYGRDRIDVDRLKLVGCCEVFG.

Aspartate 187 (proton acceptor) is an active-site residue.

Belongs to the aminoglycoside phosphotransferase family.

It carries out the reaction kanamycin A + ATP = kanamycin 3'-phosphate + ADP + H(+). This Lactococcus lactis subsp. lactis (strain IL1403) (Streptococcus lactis) protein is Probable aminoglycoside 3'-phosphotransferase (ymdC).